A 950-amino-acid chain; its full sequence is MQDTRATESDVPEHRYNAALAGRIERRWQQRWLERGTFHAPNPTGPLAGPTATLPADKLFVQDMFPYPSGAGLHVGHPLGYIATDVFARYHRMRGRNVLHALGYDAFGLPAEQYAVQTGAHPRDTTESNIATMQRQLDRLGLGHDRRRSFATTDPEYYRWTQWIFLQIYNAWYDLELNRARPISELEEQFASGARPAPDGKDWASMSQAERAAVIDSYRLVYQTDSMVNWCPGLGTVLSNEEVTAEGRSERGNFPVFRKRLWQWMMRITAYADRLVDDLDLLDWPENVKAMQRNWIGRSRGAQVRFDSPAGQIEVFTTRPDTLFGATYVVLAPEHDLVDALAAAQWPADTDPRWTGGAATPAEAVAQYRKSIAAKSDLERQENKEKTGVFLGVHAVNPVNGARVPIFIADYVLSGYGTGAIMAVPGHDQRDWEFATAFGLPIVEVISGGDITAAAHTGEGELVNSDYLNGLSVEEAKATVIGRLEADGHGTGTIQYKLRDWLFARQRYWGEPFPIVYDEDGAPHALPESMLPVRLPELDDFAPVTFDPDDADSEPSPPLAKATDWVHVELDLGDGPKKYRRDTNVMPNWAGSSWYQLRYADPTNADAFCAKENEQYWLGPRTAEHGPDDPGGVDLYVGGVEHAVLHLLYARFWQKVLFDLGYVSSSEPYRRLFNQGYIQAFAYTDPRGAYVPAAEVVERDGAFFWTDATGTEIEVSQEYGKIGKSLKNAISPDEVCDQFGADTFRFYEMSMGPLDTSRPWSTKDVVGAHRFLQRVWRLVVDEETGASRVTEDAPTDETLRFLHRTIAGVDEDFAALRDNTAGAKLIELTNHLTKSYPSGTPRAAVEPLVLMLAPLAPHVAEELWERLGHSESLAHGPFPVADPAWLVEETVEYPIQVNGKVRSRIQVPADADNAAIEAAALADEKIAALLAGATPRKLIVVPGRLVNIVA.

The short motif at 66 to 77 (PYPSGAGLHVGH) is the 'HIGH' region element. Residues 721–725 (KIGKS) carry the 'KMSKS' region motif. Lysine 724 is a binding site for ATP.

It belongs to the class-I aminoacyl-tRNA synthetase family.

The protein resides in the cytoplasm. It catalyses the reaction tRNA(Leu) + L-leucine + ATP = L-leucyl-tRNA(Leu) + AMP + diphosphate. The protein is Leucine--tRNA ligase of Nocardia farcinica (strain IFM 10152).